Consider the following 130-residue polypeptide: Small ribosomal subunit protein uS11c (130 aa).

This sequence belongs to the universal ribosomal protein uS11 family. As to quaternary structure, part of the 30S ribosomal subunit.

Its subcellular location is the plastid. The protein localises to the chloroplast. The sequence is that of Small ribosomal subunit protein uS11c from Chaetosphaeridium globosum (Charophycean green alga).